The following is a 374-amino-acid chain: Aminomethyltransferase (374 aa).

It belongs to the GcvT family. In terms of assembly, the glycine cleavage system is composed of four proteins: P, T, L and H.

The catalysed reaction is N(6)-[(R)-S(8)-aminomethyldihydrolipoyl]-L-lysyl-[protein] + (6S)-5,6,7,8-tetrahydrofolate = N(6)-[(R)-dihydrolipoyl]-L-lysyl-[protein] + (6R)-5,10-methylene-5,6,7,8-tetrahydrofolate + NH4(+). Functionally, the glycine cleavage system catalyzes the degradation of glycine. The sequence is that of Aminomethyltransferase from Edwardsiella ictaluri (strain 93-146).